The following is a 411-amino-acid chain: Dual-specificity RNA methyltransferase RlmN (411 aa).

The active-site Proton acceptor is the Glu-124. The Radical SAM core domain occupies 130 to 379; it reads EEGRGTLCIS…IRTPRGRDIL (250 aa). The cysteines at positions 137 and 382 are disulfide-linked. [4Fe-4S] cluster is bound by residues Cys-144, Cys-148, and Cys-151. S-adenosyl-L-methionine is bound by residues 208 to 209, Ser-240, 262 to 264, and Asn-339; these read GE and SLH. Residue Cys-382 is the S-methylcysteine intermediate of the active site.

Belongs to the radical SAM superfamily. RlmN family. It depends on [4Fe-4S] cluster as a cofactor.

It localises to the cytoplasm. It carries out the reaction adenosine(2503) in 23S rRNA + 2 reduced [2Fe-2S]-[ferredoxin] + 2 S-adenosyl-L-methionine = 2-methyladenosine(2503) in 23S rRNA + 5'-deoxyadenosine + L-methionine + 2 oxidized [2Fe-2S]-[ferredoxin] + S-adenosyl-L-homocysteine. It catalyses the reaction adenosine(37) in tRNA + 2 reduced [2Fe-2S]-[ferredoxin] + 2 S-adenosyl-L-methionine = 2-methyladenosine(37) in tRNA + 5'-deoxyadenosine + L-methionine + 2 oxidized [2Fe-2S]-[ferredoxin] + S-adenosyl-L-homocysteine. Functionally, specifically methylates position 2 of adenine 2503 in 23S rRNA and position 2 of adenine 37 in tRNAs. m2A2503 modification seems to play a crucial role in the proofreading step occurring at the peptidyl transferase center and thus would serve to optimize ribosomal fidelity. This Rhizobium meliloti (strain 1021) (Ensifer meliloti) protein is Dual-specificity RNA methyltransferase RlmN.